The primary structure comprises 182 residues: tRNA-splicing endonuclease (182 aa).

Residues Tyr119, His127, and Lys158 contribute to the active site.

This sequence belongs to the tRNA-intron endonuclease family. Archaeal short subfamily. As to quaternary structure, homotetramer; although the tetramer contains four active sites, only two participate in the cleavage. Therefore, it should be considered as a dimer of dimers.

The enzyme catalyses pretRNA = a 3'-half-tRNA molecule with a 5'-OH end + a 5'-half-tRNA molecule with a 2',3'-cyclic phosphate end + an intron with a 2',3'-cyclic phosphate and a 5'-hydroxyl terminus.. Endonuclease that removes tRNA introns. Cleaves pre-tRNA at the 5'- and 3'-splice sites to release the intron. The products are an intron and two tRNA half-molecules bearing 2',3' cyclic phosphate and 5'-OH termini. Recognizes a pseudosymmetric substrate in which 2 bulged loops of 3 bases are separated by a stem of 4 bp. The polypeptide is tRNA-splicing endonuclease (Saccharolobus islandicus (strain M.16.27) (Sulfolobus islandicus)).